Here is a 165-residue protein sequence, read N- to C-terminus: 2S seed storage protein 5 (165 aa).

An N-terminal signal peptide occupies residues 1-20 (MAKLILVFATLALFILLANA). 2 propeptides span residues 21-37 (SIYR…DVSN) and 71-89 (YEAD…DDEN).

It belongs to the 2S seed storage albumins family. In terms of assembly, the mature protein consists of a small and a large chain linked by disulfide bonds.

In terms of biological role, this is a 2S seed storage protein. In Arabidopsis thaliana (Mouse-ear cress), this protein is 2S seed storage protein 5 (SESA5).